Reading from the N-terminus, the 397-residue chain is F-box protein At3g49450 (397 aa).

The 50-residue stretch at 26 to 75 (GENSGTLPTDLMVEILSRVPAKSAARFRCVSNDWNSLLRSPYLTNLFLKR) folds into the F-box domain.

This Arabidopsis thaliana (Mouse-ear cress) protein is F-box protein At3g49450.